Consider the following 910-residue polypeptide: Schlafen family member 8 (910 aa).

Residues 1–354 (METHPSLAVK…WVRMMVDFGP (354 aa)) form a n'-domain region region. Catalysis depends on residues E205 and E210. Residues H280, C282, and C319 each coordinate Zn(2+). 599 to 606 (GLPGSGKT) contacts ATP.

The protein belongs to the Schlafen family. Subgroup III subfamily. It depends on Mg(2+) as a cofactor. As to expression, in T-cells, expressed at relatively constant levels during development: expressed in immature CD3(-)CD4(-)CD8(-) T-cells (DN stage), in CD4(+)CD8(+) double-positive stage (DP) and mature CD4(+) or CD8(+) thymocytes. Expression is slightly reduced at the DP stage.

The protein localises to the cytoplasm. Its function is as follows. Endoribonuclease that cleaves tRNAs and rRNAs. Cleaves tRNAs 11 nucleotides from the 3'-terminus at the acceptor stem. May be involved in immune system via regulation of inflammation. This Mus musculus (Mouse) protein is Schlafen family member 8.